Reading from the N-terminus, the 736-residue chain is Microtubule-associated protein mu-2 (736 aa).

The protein belongs to the orthoreovirus mu-2 protein family. In terms of assembly, interacts with protein mu-NS; in viral inclusions. Interacts with polymerase lambda-3; this interaction stimulates the ATPase activity of mu-2. A divalent metal cation is required as a cofactor.

It is found in the virion. Its subcellular location is the host cytoplasm. The protein resides in the host cytoskeleton. In terms of biological role, minor inner capsid (core) component. Displays NTPase and RNA 5'-triphosphatase (RTPase) activities. ATP is the preferred substrate for hydrolysis. May function as a cofactor of polymerase lambda-3. Associates with microtubules and plays a role in the formation, structural organization and morphology of viral inclusions, where the assembly of cores and the replication of viral RNA occur. Together with mu-NS, recruits the other core proteins to these inclusions. This is Microtubule-associated protein mu-2 (M1) from Mammalia (T1L).